The sequence spans 232 residues: Ashwin (232 aa).

2 stretches are compositionally biased toward basic and acidic residues: residues 64–97 (DLPKSRWGKMMEKKREQHEIKKETKRSSPADGLR) and 116–127 (KKTENGDNDRLR). Residues 64–232 (DLPKSRWGKM…KRKIQHVTWP (169 aa)) are disordered. Residues 130-140 (PQASATSNTFR) are compositionally biased toward polar residues. Ser-143 is subject to Phosphoserine. Residues 144 to 156 (DSSSSVSPLVLSS) show a composition bias toward low complexity. A compositionally biased stretch (basic and acidic residues) spans 163–179 (KMEHGNNDNKQNHDLTH). A phosphoserine mark is found at Ser-182, Ser-189, and Ser-193. A Phosphothreonine modification is found at Thr-198.

The protein belongs to the ashwin family. As to quaternary structure, component of the tRNA-splicing ligase complex.

It localises to the nucleus. The protein is Ashwin of Bos taurus (Bovine).